Consider the following 130-residue polypeptide: Small ribosomal subunit protein uS11c (130 aa).

It belongs to the universal ribosomal protein uS11 family. In terms of assembly, part of the 30S ribosomal subunit.

It localises to the plastid. The protein localises to the chloroplast. The polypeptide is Small ribosomal subunit protein uS11c (Guillardia theta (Cryptophyte)).